The following is a 419-amino-acid chain: S-adenosylmethionine synthase (419 aa).

His15 lines the ATP pocket. A Mg(2+)-binding site is contributed by Asp17. A K(+)-binding site is contributed by Glu43. L-methionine-binding residues include Glu56 and Gln99. The tract at residues 99–109 (QSPEIAQGVSC) is flexible loop. Residues 173-175 (DGK), 253-254 (RF), Asp262, 268-269 (RK), Ala285, and Lys289 each bind ATP. L-methionine is bound at residue Asp262. Lys293 lines the L-methionine pocket.

The protein belongs to the AdoMet synthase family. In terms of assembly, homotetramer; dimer of dimers. Mg(2+) is required as a cofactor. K(+) serves as cofactor.

The protein resides in the cytoplasm. The catalysed reaction is L-methionine + ATP + H2O = S-adenosyl-L-methionine + phosphate + diphosphate. The protein operates within amino-acid biosynthesis; S-adenosyl-L-methionine biosynthesis; S-adenosyl-L-methionine from L-methionine: step 1/1. In terms of biological role, catalyzes the formation of S-adenosylmethionine (AdoMet) from methionine and ATP. The overall synthetic reaction is composed of two sequential steps, AdoMet formation and the subsequent tripolyphosphate hydrolysis which occurs prior to release of AdoMet from the enzyme. The chain is S-adenosylmethionine synthase from Gloeobacter violaceus (strain ATCC 29082 / PCC 7421).